Consider the following 441-residue polypeptide: tRNA-2-methylthio-N(6)-dimethylallyladenosine synthase (441 aa).

Residues 3-119 (KKVSIRTFGC…LPGLIRNAFQ (117 aa)) enclose the MTTase N-terminal domain. 6 residues coordinate [4Fe-4S] cluster: Cys-12, Cys-48, Cys-82, Cys-155, Cys-159, and Cys-162. Residues 141-371 (RSGSISAFIP…IDLQSGISGE (231 aa)) form the Radical SAM core domain. Positions 374 to 437 (GNDVGSVQEV…QATLIGRCQD (64 aa)) constitute a TRAM domain.

The protein belongs to the methylthiotransferase family. MiaB subfamily. Monomer. [4Fe-4S] cluster is required as a cofactor.

It localises to the cytoplasm. The enzyme catalyses N(6)-dimethylallyladenosine(37) in tRNA + (sulfur carrier)-SH + AH2 + 2 S-adenosyl-L-methionine = 2-methylsulfanyl-N(6)-dimethylallyladenosine(37) in tRNA + (sulfur carrier)-H + 5'-deoxyadenosine + L-methionine + A + S-adenosyl-L-homocysteine + 2 H(+). In terms of biological role, catalyzes the methylthiolation of N6-(dimethylallyl)adenosine (i(6)A), leading to the formation of 2-methylthio-N6-(dimethylallyl)adenosine (ms(2)i(6)A) at position 37 in tRNAs that read codons beginning with uridine. The protein is tRNA-2-methylthio-N(6)-dimethylallyladenosine synthase of Prosthecochloris aestuarii (strain DSM 271 / SK 413).